The sequence spans 141 residues: Large ribosomal subunit protein uL16 (141 aa).

It belongs to the universal ribosomal protein uL16 family. In terms of assembly, part of the 50S ribosomal subunit.

In terms of biological role, binds 23S rRNA and is also seen to make contacts with the A and possibly P site tRNAs. In Thermus thermophilus (strain ATCC BAA-163 / DSM 7039 / HB27), this protein is Large ribosomal subunit protein uL16.